The following is a 317-amino-acid chain: Apolipoprotein E (317 aa).

Residues 1–18 (MKVLWAALLVTFLAGCQA) form the signal peptide. 8 repeat units span residues 80-101 (TLMDETMKELKAYKSELEEQLS), 102-123 (PVAEETRARLSKELQAAQARLG), 124-145 (ADMEDVRSRLVQYRSEVQAMLG), 146-167 (QSTEELRARLASHLRKLRKRLL), 168-189 (RDADDLQKRLAVYQAGAREGAE), 190-211 (RGVSAIRERLGPLVEQGRVRAA), 212-233 (TVGSLASQPLQERAQALGERLR), and 234-255 (ARMEEMGSRTRDRLDEVKEQVA). Residues 80-255 (TLMDETMKEL…RLDEVKEQVA (176 aa)) form an 8 X 22 AA approximate tandem repeats region. Methionine sulfoxide is present on M143. S147 is modified (phosphoserine). The LDL and other lipoprotein receptors binding stretch occupies residues 158-168 (HLRKLRKRLLR). 162 to 165 (LRKR) contacts heparin. The lipid-binding and lipoprotein association stretch occupies residues 210 to 290 (AATVGSLASQ…SWFEPLVEDM (81 aa)). Residue 229–236 (GERLRARM) participates in heparin binding. The segment at 266–317 (QQISLQAEAFQARLKSWFEPLVEDMQRQWAGLVEKVQAAVGASTAPVPIDNH) is homooligomerization. A specificity for association with VLDL region spans residues 278–290 (RLKSWFEPLVEDM).

This sequence belongs to the apolipoprotein A1/A4/E family. As to quaternary structure, homotetramer. May interact with ABCA1; functionally associated with ABCA1 in the biogenesis of HDLs. May interact with APP/A4 amyloid-beta peptide; the interaction is extremely stable in vitro but its physiological significance is unclear. May interact with MAPT. May interact with MAP2. In the cerebrospinal fluid, interacts with secreted SORL1. Interacts with PMEL; this allows the loading of PMEL luminal fragment on ILVs to induce fibril nucleation. APOE exists as multiple glycosylated and sialylated glycoforms within cells and in plasma. The extent of glycosylation and sialylation are tissue and context specific. In terms of processing, glycated in plasma VLDL. Post-translationally, phosphorylated by FAM20C in the extracellular medium.

The protein resides in the secreted. The protein localises to the extracellular space. Its subcellular location is the extracellular matrix. It localises to the extracellular vesicle. It is found in the endosome. The protein resides in the multivesicular body. Functionally, APOE is an apolipoprotein, a protein associating with lipid particles, that mainly functions in lipoprotein-mediated lipid transport between organs via the plasma and interstitial fluids. APOE is a core component of plasma lipoproteins and is involved in their production, conversion and clearance. Apolipoproteins are amphipathic molecules that interact both with lipids of the lipoprotein particle core and the aqueous environment of the plasma. As such, APOE associates with chylomicrons, chylomicron remnants, very low density lipoproteins (VLDL) and intermediate density lipoproteins (IDL) but shows a preferential binding to high-density lipoproteins (HDL). It also binds a wide range of cellular receptors including the LDL receptor/LDLR, the LDL receptor-related proteins LRP1, LRP2 and LRP8 and the very low-density lipoprotein receptor/VLDLR that mediate the cellular uptake of the APOE-containing lipoprotein particles. Finally, APOE also has a heparin-binding activity and binds heparan-sulfate proteoglycans on the surface of cells, a property that supports the capture and the receptor-mediated uptake of APOE-containing lipoproteins by cells. A main function of APOE is to mediate lipoprotein clearance through the uptake of chylomicrons, VLDLs, and HDLs by hepatocytes. APOE is also involved in the biosynthesis by the liver of VLDLs as well as their uptake by peripheral tissues ensuring the delivery of triglycerides and energy storage in muscle, heart and adipose tissues. By participating in the lipoprotein-mediated distribution of lipids among tissues, APOE plays a critical role in plasma and tissues lipid homeostasis. APOE is also involved in two steps of reverse cholesterol transport, the HDLs-mediated transport of cholesterol from peripheral tissues to the liver, and thereby plays an important role in cholesterol homeostasis. First, it is functionally associated with ABCA1 in the biogenesis of HDLs in tissues. Second, it is enriched in circulating HDLs and mediates their uptake by hepatocytes. APOE also plays an important role in lipid transport in the central nervous system, regulating neuron survival and sprouting. The polypeptide is Apolipoprotein E (APOE) (Macaca fascicularis (Crab-eating macaque)).